Reading from the N-terminus, the 200-residue chain is 3-isopropylmalate dehydratase small subunit (200 aa).

It belongs to the LeuD family. LeuD type 1 subfamily. As to quaternary structure, heterodimer of LeuC and LeuD.

The enzyme catalyses (2R,3S)-3-isopropylmalate = (2S)-2-isopropylmalate. It participates in amino-acid biosynthesis; L-leucine biosynthesis; L-leucine from 3-methyl-2-oxobutanoate: step 2/4. Catalyzes the isomerization between 2-isopropylmalate and 3-isopropylmalate, via the formation of 2-isopropylmaleate. The protein is 3-isopropylmalate dehydratase small subunit of Serratia proteamaculans (strain 568).